A 149-amino-acid polypeptide reads, in one-letter code: 3-dehydroquinate dehydratase (149 aa).

The active-site Proton acceptor is Tyr-26. Asn-78, His-84, and Asp-91 together coordinate substrate. His-104 (proton donor) is an active-site residue. Residues 105 to 106 and Arg-115 contribute to the substrate site; that span reads IS.

This sequence belongs to the type-II 3-dehydroquinase family. As to quaternary structure, homododecamer.

The enzyme catalyses 3-dehydroquinate = 3-dehydroshikimate + H2O. Its pathway is metabolic intermediate biosynthesis; chorismate biosynthesis; chorismate from D-erythrose 4-phosphate and phosphoenolpyruvate: step 3/7. Its function is as follows. Catalyzes a trans-dehydration via an enolate intermediate. This chain is 3-dehydroquinate dehydratase (aroQ), found in Buchnera aphidicola subsp. Schizaphis graminum (strain Sg).